Reading from the N-terminus, the 396-residue chain is Elongation factor Tu (396 aa).

The region spanning K10–E206 is the tr-type G domain. A G1 region spans residues G19–T26. G19 to T26 serves as a coordination point for GTP. A Mg(2+)-binding site is contributed by T26. Residues G60–N64 are G2. The G3 stretch occupies residues D81–G84. Residues D81–H85 and N136–D139 each bind GTP. The segment at N136–D139 is G4. The interval S174 to L176 is G5.

This sequence belongs to the TRAFAC class translation factor GTPase superfamily. Classic translation factor GTPase family. EF-Tu/EF-1A subfamily. Monomer.

Its subcellular location is the cytoplasm. It carries out the reaction GTP + H2O = GDP + phosphate + H(+). In terms of biological role, GTP hydrolase that promotes the GTP-dependent binding of aminoacyl-tRNA to the A-site of ribosomes during protein biosynthesis. This Acinetobacter baumannii (strain ATCC 17978 / DSM 105126 / CIP 53.77 / LMG 1025 / NCDC KC755 / 5377) protein is Elongation factor Tu.